We begin with the raw amino-acid sequence, 559 residues long: Glutamine--tRNA ligase (559 aa).

Residues Pro-44 to His-54 carry the 'HIGH' region motif. Residues Glu-45–Asn-47 and His-51–Ser-57 each bind ATP. L-glutamine contacts are provided by Asp-77 and Tyr-222. ATP contacts are provided by residues Thr-241 and Arg-272–Leu-273. Residues Leu-279–Arg-283 carry the 'KMSKS' region motif.

This sequence belongs to the class-I aminoacyl-tRNA synthetase family. Monomer.

The protein resides in the cytoplasm. It catalyses the reaction tRNA(Gln) + L-glutamine + ATP = L-glutaminyl-tRNA(Gln) + AMP + diphosphate. In Actinobacillus succinogenes (strain ATCC 55618 / DSM 22257 / CCUG 43843 / 130Z), this protein is Glutamine--tRNA ligase.